The following is a 908-amino-acid chain: DNA (cytosine-5)-methyltransferase 3A (908 aa).

The span at 1-13 (MPSSGPGDTSSSS) shows a compositional bias: low complexity. Disordered stretches follow at residues 1–183 (MPSS…PMPR) and 226–281 (NQAS…PEYE). Positions 14–37 (LEREDDRKEGEEQEENRGKEERQE) are enriched in basic and acidic residues. Positions 44–54 (KVGRPGRKRKH) are enriched in basic residues. The segment covering 69-80 (TTKSQPMAQDSG) has biased composition (polar residues). Position 102 is a phosphoserine (serine 102). The segment covering 110 to 124 (GAPAEGEGTETPPEA) has biased composition (low complexity). Phosphothreonine is present on threonine 120. Lysine 158 is covalently cross-linked (Glycyl lysine isopeptide (Lys-Gly) (interchain with G-Cter in SUMO2)). Residue arginine 167 is modified to Omega-N-methylarginine. Residues 195–399 (SKRKRDEWLA…DSGKAVEVQN (205 aa)) are interaction with DNMT1 and DNMT3B. A phosphoserine mark is found at serine 239 and serine 251. Residues 242 to 256 (AVQQPTDPASPTVAT) are compositionally biased toward polar residues. Position 257 is a phosphothreonine (threonine 257). Basic and acidic residues predominate over residues 265–275 (AGDKNATKAAD). One can recognise a PWWP domain in the interval 288 to 346 (IGELVWGKLRGFSWWPGRIVSWWMTGRSRAAEGTRWVMWFGDGKFSVVCVEKLMPLSSF). Residues serine 386 and serine 389 each carry the phosphoserine modification. The tract at residues 443-462 (AYAPPPPAKKPRKSTTEKPK) is disordered. In terms of domain architecture, ADD spans 478–610 (EVRQKCRNIE…LQMFFANNHD (133 aa)). Residues 489 to 519 (ICISCGSLNVTLEHPLFIGGMCQNCKNCFLE) form a GATA-type; atypical zinc finger. Positions 490–582 (CISCGSLNVT…KEDPWNCYMC (93 aa)) are interaction with the PRC2/EED-EZH2 complex. Residues 530-586 (QSYCTICCGGREVLMCGNNNCCRCFCVECVDLLVGPGAAQAAIKEDPWNCYMCGHKG) form a PHD-type; atypical zinc finger. The SAM-dependent MTase C5-type domain occupies 630–908 (IRVLSLFDGI…APLKEYFACV (279 aa)). S-adenosyl-L-methionine contacts are provided by residues 637–641 (DGIAT), glutamate 660, and 682–684 (DVR). The active site involves cysteine 706. Position 706 is an S-methylcysteine; by autocatalysis (cysteine 706). Position 887–889 (887–889 (RSW)) interacts with S-adenosyl-L-methionine.

The protein belongs to the class I-like SAM-binding methyltransferase superfamily. C5-methyltransferase family. Heterotetramer composed of 1 DNMT3A homodimer and 2 DNMT3L subunits (DNMT3L-DNMT3A-DNMT3A-DNMT3L). Interacts with DNMT1 and DNMT3B. Interacts with MPHOSPH8. Interacts with histone H3 that is not methylated at 'Lys-4' (H3K4). Binds the ZBTB18 transcriptional repressor. Interacts with SETDB1. Associates with HDAC1 through its ADD domain. Interacts with UHRF1. Interacts with the PRC2/EED-EZH2 complex. Interacts with UBC9, PIAS1 and PIAS2. Interacts with SPOCD1. Interacts with ZNF263; recruited to the SIX3 promoter along with other proteins involved in chromatin modification and transcriptional corepression where it contributes to transcriptional repression. In terms of processing, auto-methylated at Cys-706: auto-methylation takes place in absence of DNA substrate and inactivates the DNA methyltransferase activity. Inactivation by auto-methylation may be used to inactivate unused DNA methyltransferases in the cell. Sumoylated; sumoylation disrupts the ability to interact with histone deacetylases (HDAC1 and HDAC2) and repress transcription. In terms of tissue distribution, isoform 1 is expressed ubiquitously at low levels. Expression of isoform 2 is restricted to tissues containing cells which are undergoing active de novo methylation, including spleen, testis and thymus.

It localises to the nucleus. It is found in the chromosome. The protein localises to the cytoplasm. The enzyme catalyses a 2'-deoxycytidine in DNA + S-adenosyl-L-methionine = a 5-methyl-2'-deoxycytidine in DNA + S-adenosyl-L-homocysteine + H(+). It carries out the reaction L-cysteinyl-[protein] + S-adenosyl-L-methionine = S-methyl-L-cysteinyl-[protein] + S-adenosyl-L-homocysteine + H(+). With respect to regulation, activated by binding to the regulatory factor DNMT3L. Auto-methylation at Cys-706 in absence of DNA inactivates the DNA methyltransferase activity. Required for genome-wide de novo methylation and is essential for the establishment of DNA methylation patterns during development. DNA methylation is coordinated with methylation of histones. It modifies DNA in a non-processive manner and also methylates non-CpG sites. May preferentially methylate DNA linker between 2 nucleosomal cores and is inhibited by histone H1. Plays a role in paternal and maternal imprinting. Required for methylation of most imprinted loci in germ cells. Acts as a transcriptional corepressor for ZBTB18. Recruited to trimethylated 'Lys-36' of histone H3 (H3K36me3) sites. Can actively repress transcription through the recruitment of HDAC activity. Also has weak auto-methylation activity on Cys-706 in absence of DNA. This Mus musculus (Mouse) protein is DNA (cytosine-5)-methyltransferase 3A.